A 376-amino-acid chain; its full sequence is MKFTLHKTNGMARRGTMTFNRPQGEFTVETPAFMPVGTYGTVKGMTPEEVRVTGAEILLGNTFHLWLRPGQEIMRQHGDLHDFMQWHRPILTDSGGFQVFSLGKLRKITEEGVKFQNPINGERIFLSPEKSMEIQYDLGSDIVMIFDECTPYPATFDYAKKSMEMSLRWAKRSRERFDELGNKNALFGIVQGSTFEDLRKLSIEGLINIGFDGYAVGGLAVGEPKEDMHRILAYVCPQLPADKPRYLMGVGKPEDLVEGVRRGIDMFDCVMPTRNARNGHLFVSNGIVKIRNAKYRNDTTSLDPECDCYTCKHYTKAYLYHLDKCGEILGARLNTIHNLHYYQRLMAQIRQAIEEDRFEDFVVEFYKKIGKSVPTR.

The Proton acceptor role is filled by D93. Residues 93–97 (DSGGF), D147, Q191, and G218 each bind substrate. Positions 249–255 (GVGKPED) are RNA binding. D268 (nucleophile) is an active-site residue. The segment at 273–277 (TRNAR) is RNA binding; important for wobble base 34 recognition. Zn(2+) is bound by residues C306, C308, C311, and H337.

It belongs to the queuine tRNA-ribosyltransferase family. As to quaternary structure, homodimer. Within each dimer, one monomer is responsible for RNA recognition and catalysis, while the other monomer binds to the replacement base PreQ1. Zn(2+) is required as a cofactor.

It catalyses the reaction 7-aminomethyl-7-carbaguanine + guanosine(34) in tRNA = 7-aminomethyl-7-carbaguanosine(34) in tRNA + guanine. It participates in tRNA modification; tRNA-queuosine biosynthesis. Functionally, catalyzes the base-exchange of a guanine (G) residue with the queuine precursor 7-aminomethyl-7-deazaguanine (PreQ1) at position 34 (anticodon wobble position) in tRNAs with GU(N) anticodons (tRNA-Asp, -Asn, -His and -Tyr). Catalysis occurs through a double-displacement mechanism. The nucleophile active site attacks the C1' of nucleotide 34 to detach the guanine base from the RNA, forming a covalent enzyme-RNA intermediate. The proton acceptor active site deprotonates the incoming PreQ1, allowing a nucleophilic attack on the C1' of the ribose to form the product. After dissociation, two additional enzymatic reactions on the tRNA convert PreQ1 to queuine (Q), resulting in the hypermodified nucleoside queuosine (7-(((4,5-cis-dihydroxy-2-cyclopenten-1-yl)amino)methyl)-7-deazaguanosine). The chain is Queuine tRNA-ribosyltransferase from Histophilus somni (strain 129Pt) (Haemophilus somnus).